Reading from the N-terminus, the 444-residue chain is Interferon-induced protein 44 (444 aa).

A TLDc domain is found at 1–152; the sequence is MAVTTRLTWL…IQDYEVFRCE (152 aa).

It belongs to the IFI44 family. As to expression, hepatocytes.

The protein resides in the cytoplasm. Functionally, this protein aggregates to form microtubular structures. The sequence is that of Interferon-induced protein 44 (IFI44) from Pan troglodytes (Chimpanzee).